The primary structure comprises 337 residues: Heat-inducible transcription repressor HrcA (337 aa).

The protein belongs to the HrcA family.

Negative regulator of class I heat shock genes (grpE-dnaK-dnaJ and groELS operons). Prevents heat-shock induction of these operons. The chain is Heat-inducible transcription repressor HrcA from Nocardioides sp. (strain ATCC BAA-499 / JS614).